We begin with the raw amino-acid sequence, 564 residues long: Dihydropyrimidinase-related protein 5 (564 aa).

Threonine 509 and threonine 514 each carry phosphothreonine. 2 positions are modified to phosphoserine: serine 532 and serine 538. Arginine 559 carries the omega-N-methylarginine modification.

It belongs to the metallo-dependent hydrolases superfamily. Hydantoinase/dihydropyrimidinase family. As to quaternary structure, homotetramer, and heterotetramer with other DPYS-like proteins. Interacts with DPYSL2, DPYSL3 and DPYSL4. Interacts with SEPTIN4 isoform 4. Interacts with MAP2 and TUBB3. In terms of tissue distribution, detected in brain.

The protein resides in the cytoplasm. Its function is as follows. Involved in the negative regulation of dendrite outgrowth. The polypeptide is Dihydropyrimidinase-related protein 5 (Dpysl5) (Mus musculus (Mouse)).